Reading from the N-terminus, the 275-residue chain is NH(3)-dependent NAD(+) synthetase (275 aa).

An ATP-binding site is contributed by 47-54; it reads GISGGQDS. Residue Asp-53 coordinates Mg(2+). Arg-141 contributes to the deamido-NAD(+) binding site. Thr-161 serves as a coordination point for ATP. Residue Glu-166 coordinates Mg(2+). Lys-174 and Asp-181 together coordinate deamido-NAD(+). Lys-190 and Thr-212 together coordinate ATP. A deamido-NAD(+)-binding site is contributed by 261 to 262; the sequence is HK.

This sequence belongs to the NAD synthetase family. Homodimer.

It catalyses the reaction deamido-NAD(+) + NH4(+) + ATP = AMP + diphosphate + NAD(+) + H(+). Its pathway is cofactor biosynthesis; NAD(+) biosynthesis; NAD(+) from deamido-NAD(+) (ammonia route): step 1/1. Its function is as follows. Catalyzes the ATP-dependent amidation of deamido-NAD to form NAD. Uses ammonia as a nitrogen source. This chain is NH(3)-dependent NAD(+) synthetase, found in Lacticaseibacillus paracasei (strain ATCC 334 / BCRC 17002 / CCUG 31169 / CIP 107868 / KCTC 3260 / NRRL B-441) (Lactobacillus paracasei).